A 510-amino-acid polypeptide reads, in one-letter code: Histidine ammonia-lyase (510 aa).

Positions 143-145 (ASG) form a cross-link, 5-imidazolinone (Ala-Gly). Position 144 is a 2,3-didehydroalanine (Ser) (S144).

This sequence belongs to the PAL/histidase family. Post-translationally, contains an active site 4-methylidene-imidazol-5-one (MIO), which is formed autocatalytically by cyclization and dehydration of residues Ala-Ser-Gly.

It localises to the cytoplasm. The enzyme catalyses L-histidine = trans-urocanate + NH4(+). Its pathway is amino-acid degradation; L-histidine degradation into L-glutamate; N-formimidoyl-L-glutamate from L-histidine: step 1/3. The sequence is that of Histidine ammonia-lyase from Yersinia pestis.